A 202-amino-acid chain; its full sequence is Glycerol-3-phosphate acyltransferase (202 aa).

The next 4 helical transmembrane spans lie at 1–21, 84–104, 116–136, and 143–163; these read MTLI…FGVL, AVAA…FLHF, ILLG…LAVA, and SLAA…FLGF.

Belongs to the PlsY family. Probably interacts with PlsX.

The protein localises to the cell inner membrane. It carries out the reaction an acyl phosphate + sn-glycerol 3-phosphate = a 1-acyl-sn-glycero-3-phosphate + phosphate. It functions in the pathway lipid metabolism; phospholipid metabolism. Functionally, catalyzes the transfer of an acyl group from acyl-phosphate (acyl-PO(4)) to glycerol-3-phosphate (G3P) to form lysophosphatidic acid (LPA). This enzyme utilizes acyl-phosphate as fatty acyl donor, but not acyl-CoA or acyl-ACP. The protein is Glycerol-3-phosphate acyltransferase of Nitrosospira multiformis (strain ATCC 25196 / NCIMB 11849 / C 71).